The chain runs to 85 residues: Toxin BmKITc (85 aa).

The N-terminal stretch at 1 to 21 (MKLFLLLVIFASMLNDGLVNA) is a signal peptide. The 61-residue stretch at 22–82 (DGYIRGSDGC…KWKYESNTCG (61 aa)) folds into the LCN-type CS-alpha/beta domain. Intrachain disulfides connect cysteine 31-cysteine 81, cysteine 35-cysteine 56, cysteine 42-cysteine 63, and cysteine 46-cysteine 65.

This sequence belongs to the long (4 C-C) scorpion toxin superfamily. Sodium channel inhibitor family. Beta subfamily. Expressed by the venom gland.

Its subcellular location is the secreted. Depressant insect beta-toxins cause a transient contraction paralysis followed by a slow flaccid paralysis. They bind voltage-independently at site-4 of sodium channels (Nav) and shift the voltage of activation toward more negative potentials thereby affecting sodium channel activation and promoting spontaneous and repetitive firing. The polypeptide is Toxin BmKITc (Olivierus martensii (Manchurian scorpion)).